We begin with the raw amino-acid sequence, 352 residues long: Staphylococcal superantigen-like 3 (352 aa).

Residues 1–30 (MKMRTIAKTSLALGLLTTGAITVTTQSVKA) form the signal peptide. Positions 61-165 (ATTQAANTRQ…TIKQAQTDMT (105 aa)) are disordered. Residues 69-104 (RQERTPKLEKAPNTNEEKTSASKIEKISQPKQEEQK) are compositionally biased toward basic and acidic residues. Low complexity predominate over residues 114–141 (PKQEQSQTTTESTTPKTKVTTPPSTNTP). Positions 142–164 (QPMQSTKSDTPQSPTIKQAQTDM) are enriched in polar residues. Positions 228–326 (IDVFIVLEDN…VIKMKNGGKY (99 aa)) are sialyl Lewis X-binding.

The protein belongs to the staphylococcal/streptococcal toxin family. As to quaternary structure, interacts with host TLR2 (via its extracellular domain).

The protein resides in the secreted. Functionally, secreted protein that plays an essential role in immune innate response inhibition by interacting with and inhibiting host TLR2. In turn, bacteria recognition by immune cells is impaired and cytokine production is inhibited. Mechanistically, by interacting with TLR2, blocks ligand binding and thus inhibits activation. Second, by interacting with an already formed TLR2-lipopeptide complex, prevents TLR heterodimerization and downstream signaling. The interaction with host TLR2 does not involve sialyl Lewis X interactions. This is Staphylococcal superantigen-like 3 from Staphylococcus aureus (strain Newman).